The primary structure comprises 265 residues: tRNA pseudouridine synthase A (265 aa).

Catalysis depends on D58, which acts as the Nucleophile. Y116 contacts substrate.

The protein belongs to the tRNA pseudouridine synthase TruA family. Homodimer.

The catalysed reaction is uridine(38/39/40) in tRNA = pseudouridine(38/39/40) in tRNA. In terms of biological role, formation of pseudouridine at positions 38, 39 and 40 in the anticodon stem and loop of transfer RNAs. The protein is tRNA pseudouridine synthase A of Neisseria meningitidis serogroup C / serotype 2a (strain ATCC 700532 / DSM 15464 / FAM18).